We begin with the raw amino-acid sequence, 1188 residues long: F-box only protein 38 (1188 aa).

Residues 30-75 (MNQLSHEVLCHIFRYLPLQDIMCMECLSRKLKEAVTLYLRVVRVVD) enclose the F-box domain. Residues 59–119 (KLKEAVTLYL…LHPRYLERRR (61 aa)) are interaction with KLF7. 3 consecutive short sequence motifs (nuclear export signal) follow at residues 194–201 (LHLVGVNV), 307–316 (LEVDLGYLII), and 451–460 (LLPSLEFISL). The tract at residues 487–526 (ALVSNQNSNNDDNNAQNNNANIHDNNHHHPDDSDEENDFR) is disordered. Over residues 491 to 509 (NQNSNNDDNNAQNNNANIH) the composition is skewed to low complexity. Thr-591 carries the phosphothreonine modification. Phosphoserine occurs at positions 598, 600, and 606. Disordered stretches follow at residues 620–666 (RRYS…FPLE), 685–766 (MKAA…MEEG), and 787–909 (RTSR…STSD). 2 stretches are compositionally biased toward basic and acidic residues: residues 621-630 (RYSEREEKTG) and 685-699 (MKAA…KNKD). Residues 703 to 740 (SCSSTTASTVGNSSSHNTASQSPDFVRTVNSGGSSEPS) are compositionally biased toward polar residues. Phosphoserine is present on residues Ser-736 and Ser-740. Positions 787-798 (RTSRCSDEERPS) are enriched in basic and acidic residues. Residues 849–861 (SSQPESCDVQSNE) show a composition bias toward polar residues. Over residues 889-900 (TKPRHAMKRKRT) the composition is skewed to basic residues. The short motif at 896-899 (KRKR) is the Nuclear localization signal element.

In terms of assembly, part of the SCF (SKP1-CUL1-F-box) E3 ubiquitin-protein ligase complex SCF(FBXO38) composed of CUL1, SKP1, RBX1 and FBXO38. Interacts with KLF7. Interacts with PDCD1/PD-1.

It localises to the cytoplasm. The protein resides in the cytosol. It is found in the nucleus. The protein operates within protein modification; protein ubiquitination. Substrate recognition component of a SCF (SKP1-CUL1-F-box protein) E3 ubiquitin-protein ligase complex which mediates the ubiquitination and subsequent proteasomal degradation of PDCD1/PD-1, thereby regulating T-cells-mediated immunity. Required for anti-tumor activity of T-cells by promoting the degradation of PDCD1/PD-1; the PDCD1-mediated inhibitory pathway being exploited by tumors to attenuate anti-tumor immunity and facilitate tumor survival. May indirectly stimulate the activity of transcription factor KLF7, a regulator of neuronal differentiation, without promoting KLF7 ubiquitination. The polypeptide is F-box only protein 38 (Homo sapiens (Human)).